Consider the following 247-residue polypeptide: ATP synthase subunit a, chloroplastic (247 aa).

5 helical membrane passes run 38 to 58, 95 to 115, 134 to 154, 199 to 219, and 220 to 240; these read QVLITSWVVIAILLGSATIAV, VPFIGTMFLFIFVSNWSGALL, INTTVALALLTSVAYFYAGLT, LVVVVLVSLVPSVVPIPVMFL, and GLFTSGIQALIFATLAAAYIG.

It belongs to the ATPase A chain family. F-type ATPases have 2 components, CF(1) - the catalytic core - and CF(0) - the membrane proton channel. CF(1) has five subunits: alpha(3), beta(3), gamma(1), delta(1), epsilon(1). CF(0) has four main subunits: a, b, b' and c.

The protein localises to the plastid. It is found in the chloroplast thylakoid membrane. Its function is as follows. Key component of the proton channel; it plays a direct role in the translocation of protons across the membrane. The sequence is that of ATP synthase subunit a, chloroplastic from Panax ginseng (Korean ginseng).